The sequence spans 206 residues: Small ribosomal subunit protein uS4A (206 aa).

An S4 RNA-binding domain is found at 98-163; that stretch reads MRLDNVVYRL…SERFKMFAEN (66 aa).

Belongs to the universal ribosomal protein uS4 family. Part of the 30S ribosomal subunit. Contacts protein S5. The interaction surface between S4 and S5 is involved in control of translational fidelity.

In terms of biological role, one of the primary rRNA binding proteins, it binds directly to 16S rRNA where it nucleates assembly of the body of the 30S subunit. Its function is as follows. With S5 and S12 plays an important role in translational accuracy. The sequence is that of Small ribosomal subunit protein uS4A from Clostridium perfringens (strain ATCC 13124 / DSM 756 / JCM 1290 / NCIMB 6125 / NCTC 8237 / Type A).